The sequence spans 136 residues: Probable S-adenosyl-L-methionine-binding protein PH1056 (136 aa).

Positions 8 to 126 (IVPVGYIRKE…FPERYDCPKE (119 aa)) constitute a TsaA-like domain. Residues 48–49 (HK), R78, and 106–109 (EDGT) contribute to the S-adenosyl-L-methionine site.

This sequence belongs to the tRNA methyltransferase O family.

This chain is Probable S-adenosyl-L-methionine-binding protein PH1056, found in Pyrococcus horikoshii (strain ATCC 700860 / DSM 12428 / JCM 9974 / NBRC 100139 / OT-3).